A 505-amino-acid chain; its full sequence is Trans-cinnamate 4-monooxygenase (505 aa).

A helical transmembrane segment spans residues 3-23; sequence LLLLEKTLLGLFLAAVVAIVV. Residues 213–218 and A306 contribute to the (E)-cinnamate site; that span reads RSRLAQ. A heme-binding site is contributed by C447.

It belongs to the cytochrome P450 family. Heme serves as cofactor.

The protein resides in the membrane. The catalysed reaction is (E)-cinnamate + reduced [NADPH--hemoprotein reductase] + O2 = (E)-4-coumarate + oxidized [NADPH--hemoprotein reductase] + H2O + H(+). It participates in phenylpropanoid metabolism; trans-4-coumarate biosynthesis; trans-4-coumarate from trans-cinnamate: step 1/1. Functionally, catalyzes the first oxidative step of the phenylpropanoid pathway in higher plants by transforming trans-cinnamate into p-coumarate. The compounds formed by this pathway are essential components for lignification, pollination, and defense against ultraviolet light, predators and pathogens. The polypeptide is Trans-cinnamate 4-monooxygenase (CYP73A2) (Vigna radiata var. radiata (Mung bean)).